The chain runs to 367 residues: tRNA-specific 2-thiouridylase MnmA (367 aa).

ATP is bound by residues 11–18 (GLSGGVDS) and Met-37. An interaction with target base in tRNA region spans residues 109-111 (NPD). The active-site Nucleophile is the Cys-114. A disulfide bond links Cys-114 and Cys-211. ATP is bound at residue Gly-139. The tract at residues 161–163 (KDQ) is interaction with tRNA. Cys-211 (cysteine persulfide intermediate) is an active-site residue.

The protein belongs to the MnmA/TRMU family.

Its subcellular location is the cytoplasm. The enzyme catalyses S-sulfanyl-L-cysteinyl-[protein] + uridine(34) in tRNA + AH2 + ATP = 2-thiouridine(34) in tRNA + L-cysteinyl-[protein] + A + AMP + diphosphate + H(+). Its function is as follows. Catalyzes the 2-thiolation of uridine at the wobble position (U34) of tRNA, leading to the formation of s(2)U34. The protein is tRNA-specific 2-thiouridylase MnmA of Mycoplasma genitalium (strain ATCC 33530 / DSM 19775 / NCTC 10195 / G37) (Mycoplasmoides genitalium).